Reading from the N-terminus, the 666-residue chain is tRNA 5-methylaminomethyl-2-thiouridine biosynthesis bifunctional protein MnmC (666 aa).

A tRNA (mnm(5)s(2)U34)-methyltransferase region spans residues 1 to 253; it reads MSSPFAPIIT…KRHMLCAYYE (253 aa). Residues 283-666 form an FAD-dependent cmnm(5)s(2)U34 oxidoreductase region; the sequence is VGGGLAGCFI…FLRKKIIQGP (384 aa).

This sequence in the N-terminal section; belongs to the methyltransferase superfamily. tRNA (mnm(5)s(2)U34)-methyltransferase family. In the C-terminal section; belongs to the DAO family. The cofactor is FAD.

Its subcellular location is the cytoplasm. The catalysed reaction is 5-aminomethyl-2-thiouridine(34) in tRNA + S-adenosyl-L-methionine = 5-methylaminomethyl-2-thiouridine(34) in tRNA + S-adenosyl-L-homocysteine + H(+). Functionally, catalyzes the last two steps in the biosynthesis of 5-methylaminomethyl-2-thiouridine (mnm(5)s(2)U) at the wobble position (U34) in tRNA. Catalyzes the FAD-dependent demodification of cmnm(5)s(2)U34 to nm(5)s(2)U34, followed by the transfer of a methyl group from S-adenosyl-L-methionine to nm(5)s(2)U34, to form mnm(5)s(2)U34. This chain is tRNA 5-methylaminomethyl-2-thiouridine biosynthesis bifunctional protein MnmC, found in Legionella pneumophila (strain Corby).